Reading from the N-terminus, the 359-residue chain is Protein Wnt-5b (359 aa).

A signal peptide spans 1–17 (MPSLLLLFTAALLSSWA). A disulfide bridge connects residues C83 and C94. N-linked (GlcNAc...) asparagine glycosylation is found at N93 and N99. Disulfide bonds link C133/C141, C143/C161, C217/C231, C219/C226, C288/C319, C304/C314, C318/C358, C334/C349, C336/C346, and C341/C342. S223 is lipidated: O-palmitoleoyl serine; by PORCN. N291 and N305 each carry an N-linked (GlcNAc...) asparagine glycan.

This sequence belongs to the Wnt family. As to quaternary structure, interacts with PORCN. Post-translationally, palmitoleoylation is required for efficient binding to frizzled receptors. Depalmitoleoylation leads to Wnt signaling pathway inhibition.

The protein localises to the secreted. It localises to the extracellular space. Its subcellular location is the extracellular matrix. Ligand for members of the frizzled family of seven transmembrane receptors. Probable developmental protein. May be a signaling molecule which affects the development of discrete regions of tissues. Is likely to signal over only few cell diameters. The chain is Protein Wnt-5b (WNT5B) from Homo sapiens (Human).